A 228-amino-acid chain; its full sequence is Cytidylate kinase (228 aa).

An ATP-binding site is contributed by 17–25; it reads GPTASGKGT.

This sequence belongs to the cytidylate kinase family. Type 1 subfamily.

Its subcellular location is the cytoplasm. The enzyme catalyses CMP + ATP = CDP + ADP. It catalyses the reaction dCMP + ATP = dCDP + ADP. This Burkholderia ambifaria (strain ATCC BAA-244 / DSM 16087 / CCUG 44356 / LMG 19182 / AMMD) (Burkholderia cepacia (strain AMMD)) protein is Cytidylate kinase.